A 250-amino-acid chain; its full sequence is Indole-3-glycerol phosphate synthase (250 aa).

The protein belongs to the TrpC family.

The catalysed reaction is 1-(2-carboxyphenylamino)-1-deoxy-D-ribulose 5-phosphate + H(+) = (1S,2R)-1-C-(indol-3-yl)glycerol 3-phosphate + CO2 + H2O. It participates in amino-acid biosynthesis; L-tryptophan biosynthesis; L-tryptophan from chorismate: step 4/5. This chain is Indole-3-glycerol phosphate synthase, found in Picrophilus torridus (strain ATCC 700027 / DSM 9790 / JCM 10055 / NBRC 100828 / KAW 2/3).